The primary structure comprises 388 residues: Carbamoyl phosphate synthase small chain (388 aa).

The interval Met-1–Ala-194 is CPSase. Ser-53, Gly-246, and Gly-248 together coordinate L-glutamine. The Glutamine amidotransferase type-1 domain occupies Lys-198–Glu-387. Catalysis depends on Cys-276, which acts as the Nucleophile. Positions 277, 280, 318, 320, and 321 each coordinate L-glutamine. Active-site residues include His-360 and Glu-362.

The protein belongs to the CarA family. In terms of assembly, composed of two chains; the small (or glutamine) chain promotes the hydrolysis of glutamine to ammonia, which is used by the large (or ammonia) chain to synthesize carbamoyl phosphate. Tetramer of heterodimers (alpha,beta)4.

It catalyses the reaction hydrogencarbonate + L-glutamine + 2 ATP + H2O = carbamoyl phosphate + L-glutamate + 2 ADP + phosphate + 2 H(+). The catalysed reaction is L-glutamine + H2O = L-glutamate + NH4(+). It participates in amino-acid biosynthesis; L-arginine biosynthesis; carbamoyl phosphate from bicarbonate: step 1/1. Its pathway is pyrimidine metabolism; UMP biosynthesis via de novo pathway; (S)-dihydroorotate from bicarbonate: step 1/3. Functionally, small subunit of the glutamine-dependent carbamoyl phosphate synthetase (CPSase). CPSase catalyzes the formation of carbamoyl phosphate from the ammonia moiety of glutamine, carbonate, and phosphate donated by ATP, constituting the first step of 2 biosynthetic pathways, one leading to arginine and/or urea and the other to pyrimidine nucleotides. The small subunit (glutamine amidotransferase) binds and cleaves glutamine to supply the large subunit with the substrate ammonia. The chain is Carbamoyl phosphate synthase small chain from Ruegeria pomeroyi (strain ATCC 700808 / DSM 15171 / DSS-3) (Silicibacter pomeroyi).